A 277-amino-acid chain; its full sequence is MSTRNDVHLGHKAKKRFGQNFLNDPYVIDGIVSAINPLPGQNLVEIGPGLGAITEPVGREIDKFTVIELDRDLAARLRTHPELGSKLTIYEGDAMRFDFTQLIQEGNKLRIFGNLPYNISTPLMFHLFEFHKDIQDMHFMLQKEVVNRLAAGPGTKAYGRLTVMAQYYCKVMPVLEVPPTAFVPPPKVDSAVVRLVPYEVLPFPAKNLKWLDRVCREGFNQRRKTVRNCFKALLTKEQLEALGVNPSHRPENLTLEQFVIMANWLNDNYQAESTESA.

Residues Asn20, Leu22, Gly47, Glu68, Asp93, and Asn114 each coordinate S-adenosyl-L-methionine.

It belongs to the class I-like SAM-binding methyltransferase superfamily. rRNA adenine N(6)-methyltransferase family. RsmA subfamily.

It localises to the cytoplasm. The catalysed reaction is adenosine(1518)/adenosine(1519) in 16S rRNA + 4 S-adenosyl-L-methionine = N(6)-dimethyladenosine(1518)/N(6)-dimethyladenosine(1519) in 16S rRNA + 4 S-adenosyl-L-homocysteine + 4 H(+). Its function is as follows. Specifically dimethylates two adjacent adenosines (A1518 and A1519) in the loop of a conserved hairpin near the 3'-end of 16S rRNA in the 30S particle. May play a critical role in biogenesis of 30S subunits. The protein is Ribosomal RNA small subunit methyltransferase A of Aliivibrio salmonicida (strain LFI1238) (Vibrio salmonicida (strain LFI1238)).